Consider the following 106-residue polypeptide: UPF0473 protein LCABL_08490 (106 aa).

It belongs to the UPF0473 family.

The polypeptide is UPF0473 protein LCABL_08490 (Lacticaseibacillus casei (strain BL23) (Lactobacillus casei)).